The primary structure comprises 412 residues: Ornithine cyclodeaminase (412 aa).

The NAD(+) site is built by Asn-237, Ala-238, Asp-316, Thr-348, Met-349, Leu-350, His-351, Asp-369, Asp-392, and Val-393.

This sequence belongs to the AgrE/ArgZ ornithine cyclodeaminase family. NAD(+) is required as a cofactor.

The enzyme catalyses L-ornithine = L-proline + NH4(+). Functionally, catalyzes the conversion of ornithine to proline, with the release of ammonia. The sequence is that of Ornithine cyclodeaminase from Methanopyrus kandleri (strain AV19 / DSM 6324 / JCM 9639 / NBRC 100938).